The chain runs to 238 residues: Ethylene-responsive transcription factor ERN3 (238 aa).

A DNA-binding region (AP2/ERF) is located at residues lysine 24–serine 81.

Belongs to the AP2/ERF transcription factor family. ERF subfamily. As to expression, expressed in roots, root hairs and leaves.

The protein localises to the nucleus. Functionally, transcription factor involved in symbiotic nodule signaling in response to rhizobial Nod factors (NFs). Binds to the GCC box (NF-responsive box) of ENOD11 promoter. May act as transcriptional repressor of NF-responsive box-containing target gene promoters in root hairs. The polypeptide is Ethylene-responsive transcription factor ERN3 (Medicago truncatula (Barrel medic)).